The primary structure comprises 315 residues: Cobalamin biosynthesis protein CobD (315 aa).

The next 5 helical transmembrane spans lie at 54-74 (GLLFVLTVGMTGVVSWFILFL), 78-98 (IAYWLYVAVFVYLGYTTLAMT), 152-172 (ADGVIAPLFYLFIGGPVLALM), 203-223 (IANFIPARLAWFFLVIASFIL), and 295-315 (LLYTASTIAFIIFASIYLLLF).

This sequence belongs to the CobD/CbiB family.

It localises to the cell membrane. The protein operates within cofactor biosynthesis; adenosylcobalamin biosynthesis. Functionally, converts cobyric acid to cobinamide by the addition of aminopropanol on the F carboxylic group. In Listeria monocytogenes serotype 4b (strain F2365), this protein is Cobalamin biosynthesis protein CobD.